Reading from the N-terminus, the 210-residue chain is Na(+)-translocating NADH-quinone reductase subunit D (210 aa).

The next 6 membrane-spanning stretches (helical) occupy residues 14–34 (PIVN…ALAV), 42–62 (LVMA…ISMI), 72–92 (IIVQ…LLQA), 103–123 (VFVG…AYAM), 131–151 (FMDG…VGFV), and 178–198 (NGLL…IWII).

The protein belongs to the NqrDE/RnfAE family. In terms of assembly, composed of six subunits; NqrA, NqrB, NqrC, NqrD, NqrE and NqrF.

The protein resides in the cell inner membrane. It carries out the reaction a ubiquinone + n Na(+)(in) + NADH + H(+) = a ubiquinol + n Na(+)(out) + NAD(+). In terms of biological role, NQR complex catalyzes the reduction of ubiquinone-1 to ubiquinol by two successive reactions, coupled with the transport of Na(+) ions from the cytoplasm to the periplasm. NqrA to NqrE are probably involved in the second step, the conversion of ubisemiquinone to ubiquinol. The polypeptide is Na(+)-translocating NADH-quinone reductase subunit D (Shewanella oneidensis (strain ATCC 700550 / JCM 31522 / CIP 106686 / LMG 19005 / NCIMB 14063 / MR-1)).